Here is a 100-residue protein sequence, read N- to C-terminus: uncharacterized protein (100 aa).

The first 26 residues, 1-26 (MKRLLVSLRVWMVFLMNWVTPDRKTA), serve as a signal peptide directing secretion.

This is an uncharacterized protein from Bacillus subtilis (strain 168).